The primary structure comprises 130 residues: Small ribosomal subunit protein uS8 (130 aa).

Belongs to the universal ribosomal protein uS8 family. In terms of assembly, part of the 30S ribosomal subunit. Contacts proteins S5 and S12.

Its function is as follows. One of the primary rRNA binding proteins, it binds directly to 16S rRNA central domain where it helps coordinate assembly of the platform of the 30S subunit. The sequence is that of Small ribosomal subunit protein uS8 from Shewanella pealeana (strain ATCC 700345 / ANG-SQ1).